Here is a 386-residue protein sequence, read N- to C-terminus: Protein lin-8 (386 aa).

A sufficient for interaction with lin-35 region spans residues 175-285; sequence LGLEARRASK…FSQQYGGGGS (111 aa). The tract at residues 212-240 is disordered; it reads EEPYEETGSNWSDPAPEPSQSKSQSPEAK. Residues 229-240 show a composition bias toward low complexity; it reads PSQSKSQSPEAK.

Belongs to the lin-8 family. Interacts with lin-35 (via C-terminus). As to expression, widely expressed throughout development, with particularly prominent expression in the germline and in neuronal nuclei of the head (at protein level).

The protein resides in the nucleus. Its function is as follows. Acts as a synthetic multivulva class A (synMuvA) protein and redundantly inhibits lin-3/EGF expression to prevent inappropriate vulva induction. The chain is Protein lin-8 from Caenorhabditis elegans.